Reading from the N-terminus, the 616-residue chain is Tumor necrosis factor receptor superfamily member 11A (616 aa).

Residues Met-1–Gln-29 form the signal peptide. Residues Ile-30 to Pro-212 are Extracellular-facing. 9 disulfides stabilise this stretch: Cys-34–Cys-46, Cys-47–Cys-60, Cys-50–Cys-68, Cys-71–Cys-86, Cys-92–Cys-112, Cys-114–Cys-127, Cys-124–Cys-126, Cys-133–Cys-151, and Cys-154–Cys-169. TNFR-Cys repeat units follow at residues Cys-34–Cys-68, Cys-71–Cys-112, Cys-114–Cys-151, and Cys-154–Cys-194. Asn-105 carries an N-linked (GlcNAc...) asparagine glycan. Residues Cys-133, Ala-134, and Ser-160 each coordinate Na(+). Asn-174 carries N-linked (GlcNAc...) asparagine glycosylation. The cysteines at positions 175 and 194 are disulfide-linked. A helical transmembrane segment spans residues Gly-213–Val-233. The Cytoplasmic portion of the chain corresponds to Cys-234 to Ala-616. Residues Pro-468 to Ser-536 form a disordered region. Residues Glu-483–Pro-493 are compositionally biased toward basic and acidic residues. Positions Gly-499–Gly-508 are enriched in low complexity. The segment covering Asn-524–Ser-536 has biased composition (polar residues). A required for interaction with EEIG1 and osteoclast differentiation region spans residues Gly-544 to Val-549. The interval Gln-556 to Ala-616 is disordered. The segment covering Val-570–Ser-580 has biased composition (basic and acidic residues). Ser-580 is modified (phosphoserine).

As to quaternary structure, binds to the clefts between the subunits of the TNFSF11 ligand trimer to form a heterohexamer. Part of a complex composed of EEIG1, TNFRSF11A/RANK, PLCG2, GAB2, TEC and BTK; complex formation increases in the presence of TNFSF11/RANKL. Interacts with TRAF1, TRAF2, TRAF3, TRAF5 and TRAF6. Interacts (via cytoplasmic domain) with GAB2. Interacts (via cytoplasmic domain); with EEIG1 (via N-terminus); when in the presence of TNFSF11/RANKL. As to expression, ubiquitous expression with high levels in skeletal muscle, thymus, liver, colon, small intestine and adrenal gland.

It localises to the cell membrane. It is found in the membrane raft. Receptor for TNFSF11/RANKL/TRANCE/OPGL; essential for RANKL-mediated osteoclastogenesis. Its interaction with EEIG1 promotes osteoclastogenesis via facilitating the transcription of NFATC1 and activation of PLCG2. Involved in the regulation of interactions between T-cells and dendritic cells. In Homo sapiens (Human), this protein is Tumor necrosis factor receptor superfamily member 11A (TNFRSF11A).